Here is a 143-residue protein sequence, read N- to C-terminus: ATP synthase epsilon chain (143 aa).

Belongs to the ATPase epsilon chain family. As to quaternary structure, F-type ATPases have 2 components, CF(1) - the catalytic core - and CF(0) - the membrane proton channel. CF(1) has five subunits: alpha(3), beta(3), gamma(1), delta(1), epsilon(1). CF(0) has three main subunits: a, b and c.

Its subcellular location is the cell membrane. Functionally, produces ATP from ADP in the presence of a proton gradient across the membrane. The sequence is that of ATP synthase epsilon chain from Lacticaseibacillus casei (strain BL23) (Lactobacillus casei).